We begin with the raw amino-acid sequence, 202 residues long: Probable nicotinate-nucleotide adenylyltransferase (202 aa).

Belongs to the NadD family.

The catalysed reaction is nicotinate beta-D-ribonucleotide + ATP + H(+) = deamido-NAD(+) + diphosphate. It participates in cofactor biosynthesis; NAD(+) biosynthesis; deamido-NAD(+) from nicotinate D-ribonucleotide: step 1/1. Its function is as follows. Catalyzes the reversible adenylation of nicotinate mononucleotide (NaMN) to nicotinic acid adenine dinucleotide (NaAD). This chain is Probable nicotinate-nucleotide adenylyltransferase, found in Bacteroides thetaiotaomicron (strain ATCC 29148 / DSM 2079 / JCM 5827 / CCUG 10774 / NCTC 10582 / VPI-5482 / E50).